A 778-amino-acid chain; its full sequence is Degenerin deg-1 (778 aa).

Residues 1–82 (MSNHHSKTKK…IARNSFSKLM (82 aa)) are Cytoplasmic-facing. A helical membrane pass occupies residues 83–103 (WGLIIFSFLLMFAYQASKLIF). At 104 to 711 (KFSAHEKITD…LVNLIADFGG (608 aa)) the chain is on the extracellular side. Residues 154 to 165 (NAKTHSKSEGEK) are compositionally biased toward basic and acidic residues. Disordered stretches follow at residues 154–180 (NAKTHSKSEGEKKKPKVSRKQHSDASQ) and 201–220 (SNKTLQSQNKSGRRRSQRSI). N-linked (GlcNAc...) asparagine glycans are attached at residues Asn-202, Asn-209, Asn-272, and Asn-342. The span at 346–369 (TSTTTTTTTTPPPTTTSTTTTTTT) shows a compositional bias: low complexity. Residues 346 to 380 (TSTTTTTTTTPPPTTTSTTTTTTTTPPPTTTARPN) are disordered. N-linked (GlcNAc...) asparagine glycosylation is found at Asn-473, Asn-492, and Asn-606. The chain crosses the membrane as a helical span at residues 712–732 (HLGLWLGFSVITVMEVCVLLV). The Cytoplasmic portion of the chain corresponds to 733-778 (DMISLFFKSRHEEKLLRQSTKRKDVPEDKRQITVGSGRKSDAFVSI).

The protein belongs to the amiloride-sensitive sodium channel (TC 1.A.6) family.

It localises to the membrane. Its function is as follows. Probable sodium channel subunit. Required by a subset of neurons. The chain is Degenerin deg-1 from Caenorhabditis elegans.